Here is an 81-residue protein sequence, read N- to C-terminus: MNKQERLGMSVYLYYNRDARKLYKYGDVHYHSRRLRYLVIYVNKEDIVSVSKEIKHLKFVKDVRLSAIDDIDQDFVGNLYR.

Belongs to the UPF0298 family.

The protein localises to the cytoplasm. The chain is UPF0298 protein SAK_1599 from Streptococcus agalactiae serotype Ia (strain ATCC 27591 / A909 / CDC SS700).